A 216-amino-acid polypeptide reads, in one-letter code: MTTEFETRSDEPRLNATEIRILGSLIEKQATSPETYPLTLNALVLACNQKTSREPVMNLTQGQVGQSLRALESRGFAKLVMGSRADRWEHKVDKALELVPAQLILTGLMFLRGPQTVNELLTRSGRMHEFEDAEQVVHQLERLIARELAVLIPRQAGQREDRYTHALGDPADIEAIIAARQNPSDRGAASGVSVERIEELEARIAALEERLARLEE.

The protein belongs to the UPF0502 family.

The chain is UPF0502 protein Pfl01_3711 from Pseudomonas fluorescens (strain Pf0-1).